A 184-amino-acid chain; its full sequence is ATP synthase subunit b, chloroplastic (184 aa).

A helical membrane pass occupies residues 27 to 49 (LATNPINLSVVLGVLIFFGKGVL).

This sequence belongs to the ATPase B chain family. In terms of assembly, F-type ATPases have 2 components, F(1) - the catalytic core - and F(0) - the membrane proton channel. F(1) has five subunits: alpha(3), beta(3), gamma(1), delta(1), epsilon(1). F(0) has four main subunits: a(1), b(1), b'(1) and c(10-14). The alpha and beta chains form an alternating ring which encloses part of the gamma chain. F(1) is attached to F(0) by a central stalk formed by the gamma and epsilon chains, while a peripheral stalk is formed by the delta, b and b' chains.

The protein localises to the plastid. It is found in the chloroplast thylakoid membrane. In terms of biological role, f(1)F(0) ATP synthase produces ATP from ADP in the presence of a proton or sodium gradient. F-type ATPases consist of two structural domains, F(1) containing the extramembraneous catalytic core and F(0) containing the membrane proton channel, linked together by a central stalk and a peripheral stalk. During catalysis, ATP synthesis in the catalytic domain of F(1) is coupled via a rotary mechanism of the central stalk subunits to proton translocation. Functionally, component of the F(0) channel, it forms part of the peripheral stalk, linking F(1) to F(0). The sequence is that of ATP synthase subunit b, chloroplastic from Ceratophyllum demersum (Rigid hornwort).